The primary structure comprises 124 residues: Protein TraJ (124 aa).

Its subcellular location is the cytoplasm. In terms of biological role, this protein is essential for positively regulating the expression of transfer genes that are involved in the conjugal transfer of DNA between bacterial cells. This Escherichia coli protein is Protein TraJ (traJ).